The sequence spans 181 residues: Inner membrane-spanning protein YciB (181 aa).

The next 5 helical transmembrane spans lie at 8 to 28 (FPII…ATAA), 53 to 73 (ITLI…NAIF), 76 to 96 (WKPT…HFFG), 121 to 141 (LSWA…VYNF), and 149 to 169 (FKLF…AFYI).

This sequence belongs to the YciB family.

The protein localises to the cell inner membrane. In terms of biological role, plays a role in cell envelope biogenesis, maintenance of cell envelope integrity and membrane homeostasis. The sequence is that of Inner membrane-spanning protein YciB from Coxiella burnetii (strain CbuK_Q154) (Coxiella burnetii (strain Q154)).